The chain runs to 494 residues: Flagellin A (494 aa).

Belongs to the bacterial flagellin family. In terms of assembly, heteromer of FlaA and FlaB. FlaB is located proximal to the hook while the remainder of the filament is composed of the predominant FlaA.

It localises to the secreted. The protein resides in the bacterial flagellum. In terms of biological role, flagellin is the subunit protein which polymerizes to form the filaments of bacterial flagella. Important for motility and virulence. In Helicobacter mustelae, this protein is Flagellin A (flaA).